We begin with the raw amino-acid sequence, 439 residues long: Histidine--tRNA ligase (439 aa).

The protein belongs to the class-II aminoacyl-tRNA synthetase family. As to quaternary structure, homodimer.

The protein localises to the cytoplasm. It catalyses the reaction tRNA(His) + L-histidine + ATP = L-histidyl-tRNA(His) + AMP + diphosphate + H(+). The sequence is that of Histidine--tRNA ligase from Clostridium tetani (strain Massachusetts / E88).